A 119-amino-acid chain; its full sequence is Large ribosomal subunit protein uL18 (119 aa).

Belongs to the universal ribosomal protein uL18 family. In terms of assembly, part of the 50S ribosomal subunit; part of the 5S rRNA/L5/L18/L25 subcomplex. Contacts the 5S and 23S rRNAs.

This is one of the proteins that bind and probably mediate the attachment of the 5S RNA into the large ribosomal subunit, where it forms part of the central protuberance. This chain is Large ribosomal subunit protein uL18, found in Lactobacillus delbrueckii subsp. bulgaricus (strain ATCC 11842 / DSM 20081 / BCRC 10696 / JCM 1002 / NBRC 13953 / NCIMB 11778 / NCTC 12712 / WDCM 00102 / Lb 14).